The chain runs to 101 residues: Large ribosomal subunit protein uL24 (101 aa).

Belongs to the universal ribosomal protein uL24 family. Part of the 50S ribosomal subunit.

One of two assembly initiator proteins, it binds directly to the 5'-end of the 23S rRNA, where it nucleates assembly of the 50S subunit. Functionally, one of the proteins that surrounds the polypeptide exit tunnel on the outside of the subunit. The polypeptide is Large ribosomal subunit protein uL24 (Streptococcus equi subsp. zooepidemicus (strain H70)).